We begin with the raw amino-acid sequence, 79 residues long: UPF0349 protein GTNG_2908 (79 aa).

Belongs to the UPF0349 family.

In Geobacillus thermodenitrificans (strain NG80-2), this protein is UPF0349 protein GTNG_2908.